The following is a 307-amino-acid chain: Protein phosphatase EYA (307 aa).

The tract at residues methionine 1–aspartate 15 is necessary for optimum phosphatase activity. Aspartate 25 functions as the Nucleophile in the catalytic mechanism. Positions 25, 27, and 253 each coordinate Mg(2+). Residue aspartate 27 is the Proton donor of the active site.

Belongs to the HAD-like hydrolase superfamily. EYA family. Requires Mg(2+) as cofactor.

It catalyses the reaction O-phospho-L-tyrosyl-[protein] + H2O = L-tyrosyl-[protein] + phosphate. Its activity is regulated as follows. Inhibited by EDTA. Possesses phosphatase activity toward para-nitrophenyl phosphate (pNPP) in vitro. Possesses phosphatase activity toward several phosphotyrosine-containing peptides in vitro, with low peptide substrate specificity. This is Protein phosphatase EYA from Arabidopsis thaliana (Mouse-ear cress).